The primary structure comprises 398 residues: Phosphoglycerate kinase (398 aa).

Residues 23-25 (DLN), arginine 38, 61-64 (HFGR), arginine 119, and arginine 152 each bind substrate. Residues lysine 202, glutamate 324, and 354 to 357 (GGDT) contribute to the ATP site.

The protein belongs to the phosphoglycerate kinase family. In terms of assembly, monomer.

Its subcellular location is the cytoplasm. It catalyses the reaction (2R)-3-phosphoglycerate + ATP = (2R)-3-phospho-glyceroyl phosphate + ADP. Its pathway is carbohydrate degradation; glycolysis; pyruvate from D-glyceraldehyde 3-phosphate: step 2/5. In Rhodopseudomonas palustris (strain ATCC BAA-98 / CGA009), this protein is Phosphoglycerate kinase.